The sequence spans 896 residues: Desmocollin-3 (896 aa).

The N-terminal stretch at Met-1–Ala-31 is a signal peptide. Positions Cys-32–Arg-135 are excised as a propeptide. 5 Cadherin domains span residues Arg-136–Phe-243, Thr-244–Phe-355, Arg-356–Cys-472, Lys-473–Gln-580, and Asp-581–Lys-691. Topologically, residues Arg-136–Leu-695 are extracellular. Asn-166 is a glycosylation site (N-linked (GlcNAc...) asparagine). N-linked (GlcNAc...) asparagine glycans are attached at residues Asn-392 and Asn-547. N-linked (GlcNAc...) (high mannose) asparagine glycosylation is present at Asn-630. The chain crosses the membrane as a helical span at residues Ala-696–Val-716. Over Thr-717 to Arg-896 the chain is Cytoplasmic.

May form homodimers. Interacts with DSG1; there is evidence to suggest that the interaction promotes cell-cell adhesion of keratinocytes. Expressed in the basal layers of epidermal stratified epithelia from birth (at protein level).

It localises to the cell membrane. The protein localises to the cell junction. Its subcellular location is the desmosome. It is found in the cytoplasm. A component of desmosome cell-cell junctions which are required for positive regulation of cellular adhesion. Required for cell-cell adhesion in the epidermis, as a result required for the maintenance of the dermal cohesion and the dermal barrier function. Required for cell-cell adhesion of epithelial cell layers surrounding the telogen hair club, as a result plays an important role in telogen hair shaft anchorage. Essential for successful completion of embryo compaction and development beyond the 8-cell stage. This chain is Desmocollin-3 (Dsc3), found in Mus musculus (Mouse).